We begin with the raw amino-acid sequence, 65 residues long: Large ribosomal subunit protein bL35 (65 aa).

The segment at 1–22 is disordered; sequence MPKIKTVRGAAKRFKKTGKGGF. Over residues 10-22 the composition is skewed to basic residues; sequence AAKRFKKTGKGGF.

It belongs to the bacterial ribosomal protein bL35 family.

In Escherichia coli O127:H6 (strain E2348/69 / EPEC), this protein is Large ribosomal subunit protein bL35.